A 115-amino-acid polypeptide reads, in one-letter code: Delta-hexatoxin-Hi1a (115 aa).

The first 18 residues, 1–18 (MKVIATLYGLLFLTVVLG), serve as a signal peptide directing secretion. The propeptide occupies 19–73 (DITEGNENDLVENFREELSEADIPLLKKLEAIEDALLEKDFLPYEEEDRNARPKR). Intrachain disulfides connect cysteine 74-cysteine 88, cysteine 81-cysteine 93, cysteine 87-cysteine 104, and cysteine 89-cysteine 115.

This sequence belongs to the neurotoxin 06 (delta-actx) family. Expressed by the venom gland.

It localises to the secreted. Neurotoxin that slows inactivation of voltage-gated sodium channels (Nav). In vivo, is lethal to both vertebrates and insects. In Hadronyche infensa (Fraser island funnel-web spider), this protein is Delta-hexatoxin-Hi1a.